The chain runs to 119 residues: Large ribosomal subunit protein bL20 (119 aa).

This sequence belongs to the bacterial ribosomal protein bL20 family.

In terms of biological role, binds directly to 23S ribosomal RNA and is necessary for the in vitro assembly process of the 50S ribosomal subunit. It is not involved in the protein synthesizing functions of that subunit. In Paracoccus denitrificans (strain Pd 1222), this protein is Large ribosomal subunit protein bL20.